The following is a 395-amino-acid chain: MNEQGLSEKEIFSYLEDVKSEDTDYYRVLSSMCTHPHRIAVEAHRLFIEANLGDLGLFAGAHRLEKEVIRMLGELLHAQSVEIPSGEACESSVCGYLTTGGTESNIQAIRGMKNLVTEDGKKSGEILNIVVPESAHFSFDKVANMMGIEVKRASLDPEFRVDIASAESLIDANTIGLVGIAGNTEFGQVDPIEELSKLALENELFLHVDAAFGGFVIPFLEKPYSFDFKVPGVTSIAIDPHKMGLSTIPSGALLFRSPFFMDSLKVNTPYLTTKSQFTLTGTRSGASAAATYAVMKYLGREGYRKNVQYCMQLTTKLVKEARKFGFEPLIEPVMNVVDLRVPNPDIVREQLLKKFGWNVSITRNPRSLRLVLMPHNTARDIEEFLQDLRKVTTEL.

An N6-(pyridoxal phosphate)lysine modification is found at Lys-242.

Belongs to the group II decarboxylase family. MfnA subfamily. Pyridoxal 5'-phosphate serves as cofactor.

It catalyses the reaction L-tyrosine + H(+) = tyramine + CO2. The catalysed reaction is L-aspartate + H(+) = beta-alanine + CO2. Its pathway is cofactor biosynthesis; methanofuran biosynthesis. It participates in cofactor biosynthesis; coenzyme A biosynthesis. In terms of biological role, catalyzes the decarboxylation of L-tyrosine to produce tyramine for methanofuran biosynthesis. Can also catalyze the decarboxylation of L-aspartate to produce beta-alanine for coenzyme A (CoA) biosynthesis. This is Probable L-tyrosine/L-aspartate decarboxylase from Methanosarcina barkeri (strain Fusaro / DSM 804).